A 617-amino-acid chain; its full sequence is MSEEQARAEAPAGARQRRRSELEGYSVSLASLKLSPMYPEEEQRTTGGISSTAHYLDGTFNYTTNPDATNSSVDYYSVAPEPQEENLQPLPNGSSSPPVFVPSSPQLSPFLGHPPAGQHTAQQVPYYLEPSGTSIYRSSVLASAGSRVELCSAPGRQDVYTAVGASGPSGASGPSGAIGLVKEIRYCSVCSDYASGYHYGVWSCEGCKAFFKRSIQGHNDYVCPATNQCTIDRNRRKSCQACRLRKCYEVGMMKGGFRKERGGRIIKHNRRPSGLKERERGYSKAQSGSDVREALPQDGQSSSGIGGGVADVVCMSPEQVLLLLLRAEPPTLCSRQKHSRPYSELTIMSLLTNMADRELVHMIAWAKKVPGFQDLSLHDQVQLLESSWLEILMIGLIWRSIYTPGKLIFAQDLILDKSEGECVEGMAEIFDMLLATVARFRTLKLKSEEFVCLKAIILLNSGAFSFCSSPVEPLRDGFMVQCMMDNITDALIYYISQSGISVQLQSRRQAQLLLLLSHIRHMSYKGMEHLYSMKCKNKVPLYDLLLEMLDAHRLRPLGKVPRIWADRVSSSPTTTATTPTTNTTTTTTTTTHHPSNGSTCPADLPSNPPGPGQSPSP.

The tract at residues 1–54 (MSEEQARAEAPAGARQRRRSELEGYSVSLASLKLSPMYPEEEQRTTGGISSTAH) is disordered. The modulating stretch occupies residues 1–186 (MSEEQARAEA…AIGLVKEIRY (186 aa)). NR C4-type zinc fingers lie at residues 187-207 (CSVC…CEGC) and 223-247 (CPAT…LRKC). Positions 187 to 252 (CSVCSDYASG…RLRKCYEVGM (66 aa)) form a DNA-binding region, nuclear receptor. The interval 253-315 (MKGGFRKERG…GGGVADVVCM (63 aa)) is hinge. The tract at residues 269–303 (NRRPSGLKERERGYSKAQSGSDVREALPQDGQSSS) is disordered. Residues 316–552 (SPEQVLLLLL…DLLLEMLDAH (237 aa)) form the NR LBD domain. Residues 568–617 (VSSSPTTTATTPTTNTTTTTTTTTHHPSNGSTCPADLPSNPPGPGQSPSP) are disordered. Residues 573 to 591 (TTTATTPTTNTTTTTTTTT) show a composition bias toward low complexity. Positions 606–617 (SNPPGPGQSPSP) are enriched in pro residues.

This sequence belongs to the nuclear hormone receptor family. NR3 subfamily. As to quaternary structure, binds DNA as a homodimer. Can form a heterodimer with ER-beta. As to expression, ovary and testis.

The protein localises to the nucleus. In terms of biological role, the steroid hormones and their receptors are involved in the regulation of eukaryotic gene expression and affect cellular proliferation and differentiation in target tissues. The sequence is that of Estrogen receptor (esr1) from Ictalurus punctatus (Channel catfish).